The chain runs to 537 residues: Cytoplasmic 60S subunit biogenesis factor REI1 homolog (537 aa).

2 C2H2-type zinc fingers span residues 18 to 42 (YTCN…SDWH) and 83 to 107 (KTCE…STKH). Disordered regions lie at residues 101–151 (HLSS…AEEE) and 163–204 (SIHD…PEAL). A compositionally biased stretch (low complexity) spans 192–204 (EETPTTTPKPEAL). A C2H2-type 3 zinc finger spans residues 260–284 (NECLTCGKMKVNVFAIQTHMRDKSH). Acidic residues predominate over residues 312 to 322 (DWETEEEDKGE). Disordered stretches follow at residues 312–361 (DWET…ASSL) and 382–401 (GKHP…ADGI). A compositionally biased stretch (basic and acidic residues) spans 323–339 (EDGGVRLGAKRESKVVD). Over residues 340 to 356 (ENGDEVMEDEEGWETDS) the composition is skewed to acidic residues. The span at 383–395 (KHPHHSRENKKAH) shows a compositional bias: basic residues.

Belongs to the REI1 family. In terms of assembly, associates with nascent pre-60S particles that have not yet entered the translating pool, and is released from mature 60S subunits.

It is found in the cytoplasm. Pre-60S-associated factor involved in the cytoplasmic maturation of the 60S subunit. Involved in the dissociation and recycling of other late pre-60S factors before newly synthesized large ribosomal subunits enter translation. This Chaetomium thermophilum (strain DSM 1495 / CBS 144.50 / IMI 039719) (Thermochaetoides thermophila) protein is Cytoplasmic 60S subunit biogenesis factor REI1 homolog.